Here is a 154-residue protein sequence, read N- to C-terminus: 3-hydroxyacyl-[acyl-carrier-protein] dehydratase FabZ (154 aa).

Residue H54 is part of the active site.

The protein belongs to the thioester dehydratase family. FabZ subfamily.

Its subcellular location is the cytoplasm. It carries out the reaction a (3R)-hydroxyacyl-[ACP] = a (2E)-enoyl-[ACP] + H2O. Involved in unsaturated fatty acids biosynthesis. Catalyzes the dehydration of short chain beta-hydroxyacyl-ACPs and long chain saturated and unsaturated beta-hydroxyacyl-ACPs. This chain is 3-hydroxyacyl-[acyl-carrier-protein] dehydratase FabZ, found in Chlamydia caviae (strain ATCC VR-813 / DSM 19441 / 03DC25 / GPIC) (Chlamydophila caviae).